Here is a 147-residue protein sequence, read N- to C-terminus: Large ribosomal subunit protein uL15 (147 aa).

Residues 1–62 (MDLNTLKPAL…GQMPLQRRLP (62 aa)) are disordered. A compositionally biased stretch (basic residues) spans 30 to 39 (TATKGHKGQK).

The protein belongs to the universal ribosomal protein uL15 family. In terms of assembly, part of the 50S ribosomal subunit.

Functionally, binds to the 23S rRNA. The chain is Large ribosomal subunit protein uL15 from Pelobacter propionicus (strain DSM 2379 / NBRC 103807 / OttBd1).